The chain runs to 348 residues: NADH-ubiquinone oxidoreductase chain 2 (348 aa).

A run of 10 helical transmembrane segments spans residues 3–23, 25–45, 59–79, 93–115, 149–169, 178–198, 201–221, 239–259, 276–296, and 326–346; these read PIII…VLMS, HWFM…PVLM, YFLT…INLI, TAST…HFWV, LNMT…GWGG, ILAF…MFNP, TLLN…ILIF, IMTV…PLSG, IALA…YMRL, and LPTL…MMML.

This sequence belongs to the complex I subunit 2 family. Core subunit of respiratory chain NADH dehydrogenase (Complex I) which is composed of 45 different subunits. Interacts with TMEM242.

The protein resides in the mitochondrion inner membrane. The enzyme catalyses a ubiquinone + NADH + 5 H(+)(in) = a ubiquinol + NAD(+) + 4 H(+)(out). In terms of biological role, core subunit of the mitochondrial membrane respiratory chain NADH dehydrogenase (Complex I) which catalyzes electron transfer from NADH through the respiratory chain, using ubiquinone as an electron acceptor. Essential for the catalytic activity and assembly of complex I. The sequence is that of NADH-ubiquinone oxidoreductase chain 2 from Thyroptera tricolor (Spix's disk-winged bat).